Reading from the N-terminus, the 298-residue chain is NADH-cytochrome b5 reductase 2 (298 aa).

A helical transmembrane segment spans residues 15–38 (FVLPVAAAAVGLASYSFTSSSFIA). An FAD-binding FR-type domain is found at 49–153 (DEWIDLKLIS…KGPFVKWKWE (105 aa)). 156–191 (QFKSIALIGGGTGITPLYQLIHEITKNPADKTQVSL) serves as a coordination point for FAD.

The protein belongs to the flavoprotein pyridine nucleotide cytochrome reductase family. FAD serves as cofactor.

The protein resides in the mitochondrion outer membrane. It catalyses the reaction 2 Fe(III)-[cytochrome b5] + NADH = 2 Fe(II)-[cytochrome b5] + NAD(+) + H(+). In terms of biological role, may mediate the reduction of outer membrane cytochrome b5. This is NADH-cytochrome b5 reductase 2 (MCR1) from Scheffersomyces stipitis (strain ATCC 58785 / CBS 6054 / NBRC 10063 / NRRL Y-11545) (Yeast).